We begin with the raw amino-acid sequence, 461 residues long: Deoxyguanosinetriphosphate triphosphohydrolase-like protein (461 aa).

The segment at 22–41 (ERFLPDPPREKDNRPPFRRD) is disordered. Basic and acidic residues predominate over residues 24–41 (FLPDPPREKDNRPPFRRD). Residues 72 to 285 (RLTHSLEVAQ…MELADDIAYG (214 aa)) form the HD domain.

It belongs to the dGTPase family. Type 2 subfamily.

This Haemophilus influenzae (strain PittEE) protein is Deoxyguanosinetriphosphate triphosphohydrolase-like protein.